Here is a 370-residue protein sequence, read N- to C-terminus: Protein RKD5 (370 aa).

The segment at 193-232 (DSETESEESVNEKTEHSEFENDKTEQSESDAKTEILKKKK) is disordered. Residues 202 to 228 (VNEKTEHSEFENDKTEQSESDAKTEIL) are compositionally biased toward basic and acidic residues. Residues 224–309 (KTEILKKKKR…AEKQQEKNEA (86 aa)) enclose the RWP-RK domain. Residues 283-328 (HRKIKSLDCLIHDLQREAEKQQEKNEAAAMAVAKKQEKLETEKRNI) adopt a coiled-coil conformation. The disordered stretch occupies residues 347 to 370 (NFKKRHRASRAKKNQESLVTSSST). Over residues 349 to 358 (KKRHRASRAK) the composition is skewed to basic residues.

The protein resides in the nucleus. Functionally, putative transcription factor. The chain is Protein RKD5 (RKD5) from Arabidopsis thaliana (Mouse-ear cress).